Here is a 331-residue protein sequence, read N- to C-terminus: Ketol-acid reductoisomerase (NADP(+)) (331 aa).

A KARI N-terminal Rossmann domain is found at 2 to 182; sequence AQLFYDSDAD…GGTRAGILET (181 aa). NADP(+) is bound by residues 25–28, Ser-51, Ser-53, and 83–86; these read YGSQ and DEFQ. His-108 is an active-site residue. Gly-134 is an NADP(+) binding site. The 146-residue stretch at 183-328 folds into the KARI C-terminal knotted domain; that stretch reads NFKEETETDL…KGLRAMFSWL (146 aa). Mg(2+)-binding residues include Asp-191, Glu-195, Glu-227, and Glu-231. Ser-252 serves as a coordination point for substrate.

This sequence belongs to the ketol-acid reductoisomerase family. Mg(2+) is required as a cofactor.

It catalyses the reaction (2R)-2,3-dihydroxy-3-methylbutanoate + NADP(+) = (2S)-2-acetolactate + NADPH + H(+). The catalysed reaction is (2R,3R)-2,3-dihydroxy-3-methylpentanoate + NADP(+) = (S)-2-ethyl-2-hydroxy-3-oxobutanoate + NADPH + H(+). It functions in the pathway amino-acid biosynthesis; L-isoleucine biosynthesis; L-isoleucine from 2-oxobutanoate: step 2/4. The protein operates within amino-acid biosynthesis; L-valine biosynthesis; L-valine from pyruvate: step 2/4. In terms of biological role, involved in the biosynthesis of branched-chain amino acids (BCAA). Catalyzes an alkyl-migration followed by a ketol-acid reduction of (S)-2-acetolactate (S2AL) to yield (R)-2,3-dihydroxy-isovalerate. In the isomerase reaction, S2AL is rearranged via a Mg-dependent methyl migration to produce 3-hydroxy-3-methyl-2-ketobutyrate (HMKB). In the reductase reaction, this 2-ketoacid undergoes a metal-dependent reduction by NADPH to yield (R)-2,3-dihydroxy-isovalerate. This is Ketol-acid reductoisomerase (NADP(+)) from Prochlorococcus marinus (strain MIT 9313).